A 476-amino-acid chain; its full sequence is UDP-N-acetylmuramate--L-alanine ligase (476 aa).

125-131 is an ATP binding site; that stretch reads GTHGKTT.

Belongs to the MurCDEF family.

The protein localises to the cytoplasm. It carries out the reaction UDP-N-acetyl-alpha-D-muramate + L-alanine + ATP = UDP-N-acetyl-alpha-D-muramoyl-L-alanine + ADP + phosphate + H(+). It functions in the pathway cell wall biogenesis; peptidoglycan biosynthesis. Functionally, cell wall formation. The chain is UDP-N-acetylmuramate--L-alanine ligase from Histophilus somni (strain 129Pt) (Haemophilus somnus).